The primary structure comprises 175 residues: ATP synthase subunit b 2 (175 aa).

A helical membrane pass occupies residues 20–40 (LIFWTAVTFVIVLLILKKFAW).

The protein belongs to the ATPase B chain family. As to quaternary structure, F-type ATPases have 2 components, F(1) - the catalytic core - and F(0) - the membrane proton channel. F(1) has five subunits: alpha(3), beta(3), gamma(1), delta(1), epsilon(1). F(0) has four main subunits: a(1), b(2) and c(10-14). The alpha and beta chains form an alternating ring which encloses part of the gamma chain. F(1) is attached to F(0) by a central stalk formed by the gamma and epsilon chains, while a peripheral stalk is formed by the delta and b chains.

It localises to the cell inner membrane. In terms of biological role, f(1)F(0) ATP synthase produces ATP from ADP in the presence of a proton or sodium gradient. F-type ATPases consist of two structural domains, F(1) containing the extramembraneous catalytic core and F(0) containing the membrane proton channel, linked together by a central stalk and a peripheral stalk. During catalysis, ATP synthesis in the catalytic domain of F(1) is coupled via a rotary mechanism of the central stalk subunits to proton translocation. Functionally, component of the F(0) channel, it forms part of the peripheral stalk, linking F(1) to F(0). In Prosthecochloris aestuarii (strain DSM 271 / SK 413), this protein is ATP synthase subunit b 2.